The primary structure comprises 141 residues: Protein KRTCAP2 homolog (141 aa).

Helical transmembrane passes span 11–31 (VVSS…LRFC), 42–62 (VLLG…CVSN), 74–94 (AKLL…AGLV), and 97–117 (VCAT…NRIS).

Belongs to the KRTCAP2 family. As to quaternary structure, component of the oligosaccharyltransferase (OST) complex.

It localises to the membrane. In terms of biological role, subunit of the oligosaccharyl transferase (OST) complex that catalyzes the initial transfer of a defined glycan (Glc(3)Man(9)GlcNAc(2) in eukaryotes) from the lipid carrier dolichol-pyrophosphate to an asparagine residue within an Asn-X-Ser/Thr consensus motif in nascent polypeptide chains, the first step in protein N-glycosylation. N-glycosylation occurs cotranslationally and the complex associates with the Sec61 complex at the channel-forming translocon complex that mediates protein translocation across the endoplasmic reticulum (ER). All subunits are required for a maximal enzyme activity. This Drosophila melanogaster (Fruit fly) protein is Protein KRTCAP2 homolog.